The primary structure comprises 100 residues: Small ribosomal subunit protein uS14c (100 aa).

It belongs to the universal ribosomal protein uS14 family. As to quaternary structure, part of the 30S ribosomal subunit.

The protein resides in the plastid. Its subcellular location is the chloroplast. Binds 16S rRNA, required for the assembly of 30S particles. The polypeptide is Small ribosomal subunit protein uS14c (Tetradesmus obliquus (Green alga)).